Reading from the N-terminus, the 103-residue chain is Large ribosomal subunit protein mL41 (103 aa).

It belongs to the mitochondrion-specific ribosomal protein mL41 family. In terms of assembly, component of the mitochondrial large ribosomal subunit (mt-LSU). Mature N.crassa 74S mitochondrial ribosomes consist of a small (37S) and a large (54S) subunit. The 37S small subunit contains a 16S ribosomal RNA (16S mt-rRNA) and 32 different proteins. The 54S large subunit contains a 23S rRNA (23S mt-rRNA) and 42 different proteins.

The protein resides in the mitochondrion. Functionally, component of the mitochondrial ribosome (mitoribosome), a dedicated translation machinery responsible for the synthesis of mitochondrial genome-encoded proteins, including at least some of the essential transmembrane subunits of the mitochondrial respiratory chain. The mitoribosomes are attached to the mitochondrial inner membrane and translation products are cotranslationally integrated into the membrane. The chain is Large ribosomal subunit protein mL41 (mrpl27) from Neurospora crassa (strain ATCC 24698 / 74-OR23-1A / CBS 708.71 / DSM 1257 / FGSC 987).